The primary structure comprises 321 residues: Protein BIG GRAIN 1-like E (321 aa).

The interval 134–217 is disordered; that stretch reads AGSKKNKSKS…PPPYLNTPTK (84 aa). The span at 135–147 shows a compositional bias: basic residues; the sequence is GSKKNKSKSKSKT. The segment covering 172-206 has biased composition (low complexity); sequence ISHFFSSSRSTSTTTTTTASSSSKSLISSSSSGFR.

Belongs to the BIG GRAIN 1 (BG1) plant protein family.

Its subcellular location is the cell membrane. Functionally, involved in auxin transport. Regulator of the auxin signaling pathway. The protein is Protein BIG GRAIN 1-like E of Arabidopsis thaliana (Mouse-ear cress).